The following is a 472-amino-acid chain: Argininosuccinate lyase (472 aa).

It belongs to the lyase 1 family. Argininosuccinate lyase subfamily.

The protein localises to the cytoplasm. It carries out the reaction 2-(N(omega)-L-arginino)succinate = fumarate + L-arginine. Its pathway is amino-acid biosynthesis; L-arginine biosynthesis; L-arginine from L-ornithine and carbamoyl phosphate: step 3/3. In Maricaulis maris (strain MCS10) (Caulobacter maris), this protein is Argininosuccinate lyase.